Reading from the N-terminus, the 503-residue chain is Ent-kaurene oxidase-like 5 (503 aa).

The chain crosses the membrane as a helical span at residues 8-28; it reads GAGGIGVAAAAAVVAATLAVV. Cys-448 lines the heme pocket.

Belongs to the cytochrome P450 family. The cofactor is heme. Expressed in roots.

It is found in the membrane. May hydroxylate diterpenes. This chain is Ent-kaurene oxidase-like 5, found in Oryza sativa subsp. japonica (Rice).